Reading from the N-terminus, the 268-residue chain is Helix-loop-helix protein 6 (268 aa).

Positions 117–130 are enriched in low complexity; the sequence is QSQVQPQLPTQSQP. The tract at residues 117–140 is disordered; that stretch reads QSQVQPQLPTQSQPKPSSKASLDT. Residues 131–140 show a composition bias toward polar residues; it reads KPSSKASLDT. In terms of domain architecture, bHLH spans 173-225; it reads SSVWKRNERERCRVRNVNDGYERLRKHLPVHFDEKRISKVDTLRLAIRYIKHL.

Expressed in the gland cells of the pharynx and weakly in the pharyngeal neuron.

It localises to the nucleus. Its function is as follows. Transcription factor that regulates the development of the g2 pharyngeal gland cells and pharyngeal gland function and thereby is required for feeding. Required for the expression of a number of genes in the pharyngeal gland, possibly by binding to the E box motif (5'-CANNTG-3') in the promoter region of these genes. Positively regulates the expression of genes encoding mucin-like proteins, which lubricate the pharyngeal tract to ensure efficient passage of the bacterial food source. Exhibits pharyngeal gland-specific positive autoregulation activity. In Caenorhabditis elegans, this protein is Helix-loop-helix protein 6 (hlh-6).